A 465-amino-acid polypeptide reads, in one-letter code: Kynurenine 3-monooxygenase (465 aa).

The segment at M1–G26 is disordered. A compositionally biased stretch (basic and acidic residues) spans E15 to H25. 2 consecutive transmembrane segments (helical) span residues L405–Y427 and L440–Q462.

It belongs to the aromatic-ring hydroxylase family. KMO subfamily. FAD is required as a cofactor.

The protein localises to the mitochondrion. It localises to the membrane. The catalysed reaction is L-kynurenine + NADPH + O2 + H(+) = 3-hydroxy-L-kynurenine + NADP(+) + H2O. It functions in the pathway cofactor biosynthesis; NAD(+) biosynthesis; quinolinate from L-kynurenine: step 1/3. Its function is as follows. Catalyzes the hydroxylation of L-kynurenine (L-Kyn) to form 3-hydroxy-L-kynurenine (L-3OHKyn). Required for synthesis of quinolinic acid. The sequence is that of Kynurenine 3-monooxygenase from Drosophila melanogaster (Fruit fly).